The primary structure comprises 386 residues: Heat-inducible transcription repressor HrcA (386 aa).

Belongs to the HrcA family.

In terms of biological role, negative regulator of class I heat shock genes (grpE-dnaK-dnaJ and groELS operons). Prevents heat-shock induction of these operons. The chain is Heat-inducible transcription repressor HrcA from Chlamydia caviae (strain ATCC VR-813 / DSM 19441 / 03DC25 / GPIC) (Chlamydophila caviae).